We begin with the raw amino-acid sequence, 215 residues long: Ribose-5-phosphate isomerase A (215 aa).

Substrate is bound by residues 26 to 29 (TGST), 79 to 82 (DGAD), and 92 to 95 (KGGG). Glu101 serves as the catalytic Proton acceptor. Lys119 lines the substrate pocket.

This sequence belongs to the ribose 5-phosphate isomerase family. Homodimer.

The enzyme catalyses aldehydo-D-ribose 5-phosphate = D-ribulose 5-phosphate. The protein operates within carbohydrate degradation; pentose phosphate pathway; D-ribose 5-phosphate from D-ribulose 5-phosphate (non-oxidative stage): step 1/1. In terms of biological role, catalyzes the reversible conversion of ribose-5-phosphate to ribulose 5-phosphate. The polypeptide is Ribose-5-phosphate isomerase A (Xylella fastidiosa (strain 9a5c)).